We begin with the raw amino-acid sequence, 131 residues long: Small ribosomal subunit protein uS8 (131 aa).

It belongs to the universal ribosomal protein uS8 family. As to quaternary structure, part of the 30S ribosomal subunit. Contacts proteins S5 and S12.

Its function is as follows. One of the primary rRNA binding proteins, it binds directly to 16S rRNA central domain where it helps coordinate assembly of the platform of the 30S subunit. This chain is Small ribosomal subunit protein uS8, found in Polaromonas naphthalenivorans (strain CJ2).